The sequence spans 306 residues: Epoxyqueuosine reductase (306 aa).

Residue Asp131 is the Proton donor of the active site. A 4Fe-4S ferredoxin-type domain is found at 173–205 (LDLTYDHPVTDHCGTCTACIDACPTQAIVQPYV). [4Fe-4S] cluster is bound by residues Cys185, Cys188, Cys191, Cys195, Cys211, Cys238, Cys241, and Cys245.

The protein belongs to the QueG family. As to quaternary structure, monomer. Requires cob(II)alamin as cofactor. [4Fe-4S] cluster serves as cofactor.

It localises to the cytoplasm. It carries out the reaction epoxyqueuosine(34) in tRNA + AH2 = queuosine(34) in tRNA + A + H2O. It participates in tRNA modification; tRNA-queuosine biosynthesis. Catalyzes the conversion of epoxyqueuosine (oQ) to queuosine (Q), which is a hypermodified base found in the wobble positions of tRNA(Asp), tRNA(Asn), tRNA(His) and tRNA(Tyr). In Cellulophaga algicola (strain DSM 14237 / IC166 / ACAM 630), this protein is Epoxyqueuosine reductase.